The primary structure comprises 189 residues: Fucolectin-5 (189 aa).

Residues 1 to 31 (MKTCNLTDRMKVKMIMLLFQILAISTLQSDS) form the signal peptide. Residues 40–189 (QENVAVRGKA…VEVNALLPAN (150 aa)) form an F5/8 type C-like region. 3 residues coordinate Ca(2+): D70, N72, and S81. 3 disulfide bridges follow: C82–C178, C114–C115, and C140–C156. Positions 84 and 111 each coordinate alpha-L-fucose. Residues 111 to 113 (RGD) carry the Cell attachment site motif. Alpha-L-fucose is bound at residue R118. Residues C178 and E179 each contribute to the Ca(2+) site.

It belongs to the fucolectin family. Homotrimer. As to expression, gill mucous cells.

It localises to the secreted. Functionally, acts as a defensive agent. Recognizes blood group fucosylated oligosaccharides including A, B, H and Lewis B-type antigens. Does not recognize Lewis A antigen and has low affinity for monovalent haptens. This Anguilla japonica (Japanese eel) protein is Fucolectin-5.